The sequence spans 253 residues: MVSSFTSAPRSGFYYFAQGWKLVSQPGIRRFVILPLLVNILLMGGAFWWLFTQLDVWIPTFMSYVPDWLQWLSYLLWPLAVISVLLVFGYFFSTIANWIAAPFNGLLAEQLEARLTGATPPDTGIFGIMKDVPRIMKREWQKFVWYLPRAIVLLILYFIPGIGQTVAPVLWFLFSAWMLAIQYCDYPFDTHKVPFKEMRTALRTRKITNMQFGALTSLFTMIPLLNLFIMPVAVCGATAMWVDCYRDKHAMWR.

Transmembrane regions (helical) follow at residues 31–51 (FVIL…WWLF), 75–95 (LLWP…FSTI), 151–171 (IVLL…PVLW), and 222–242 (IPLL…AMWV).

This sequence belongs to the CysZ family.

Its subcellular location is the cell inner membrane. High affinity, high specificity proton-dependent sulfate transporter, which mediates sulfate uptake. Provides the sulfur source for the cysteine synthesis pathway. In Shigella flexneri, this protein is Sulfate transporter CysZ.